Here is a 721-residue protein sequence, read N- to C-terminus: YTH domain-containing protein 1 (721 aa).

A compositionally biased stretch (acidic residues) spans 29–38 (EADIAEELQD). A disordered region spans residues 29-239 (EADIAEELQD…GGGTHSHSQK (211 aa)). The span at 48 to 75 (SESNGGDSSDSEPSISSVSTATSSLAGS) shows a compositional bias: low complexity. Basic and acidic residues predominate over residues 135–151 (ASDKVKSKSPDTEDRQP). Residues 254 to 391 (TRFFLIKSNN…KIGGELCRLF (138 aa)) form the YTH domain. RNA is bound by residues 260-262 (KSN), Trp-276, and Trp-327. Disordered regions lie at residues 424-471 (PPRS…RHHH), 580-605 (DGPG…DKAP), and 651-721 (AGGG…DNRR). Residues 432 to 443 (GHGGGGRGGGRG) are compositionally biased toward gly residues. Positions 451–471 (PMRHKRSYHGAPHHRPYRHHH) are enriched in basic residues. Residues 583–600 (GAPPLPDYPPPQRPPPPG) are compositionally biased toward pro residues. The span at 651 to 670 (AGGGMGAGGGSGGGMGGPGG) shows a compositional bias: gly residues. Residues 699 to 708 (RDSRPFRERG) show a composition bias toward basic and acidic residues.

It localises to the nucleus. Functionally, regulator of alternative splicing that specifically recognizes and binds N6-methyladenosine (m6A)-containing RNAs. Acts by acting as a reader of m6A methylation. Required for sex determination and dosage compensation via Sxl alternative splicing: m6A methylation acts as a key regulator of Sxl pre-mRNA and promotes female-specific alternative splicing of Sxl, which determines female physiognomy. M6A methylation is also required for neuronal functions. This is YTH domain-containing protein 1 from Drosophila melanogaster (Fruit fly).